The chain runs to 1203 residues: DNA-directed RNA polymerase subunit beta' (1203 aa).

Zn(2+) contacts are provided by Cys60, Cys62, Cys75, and Cys78. Mg(2+)-binding residues include Asp449, Asp451, and Asp453. Zn(2+) is bound by residues Cys818, Cys892, Cys899, and Cys902.

The protein belongs to the RNA polymerase beta' chain family. As to quaternary structure, the RNAP catalytic core consists of 2 alpha, 1 beta, 1 beta' and 1 omega subunit. When a sigma factor is associated with the core the holoenzyme is formed, which can initiate transcription. Mg(2+) serves as cofactor. It depends on Zn(2+) as a cofactor.

The catalysed reaction is RNA(n) + a ribonucleoside 5'-triphosphate = RNA(n+1) + diphosphate. Functionally, DNA-dependent RNA polymerase catalyzes the transcription of DNA into RNA using the four ribonucleoside triphosphates as substrates. This Bacillus cereus (strain ZK / E33L) protein is DNA-directed RNA polymerase subunit beta'.